A 170-amino-acid polypeptide reads, in one-letter code: MKNFNGKLILIGLMGAGKTTLGRQMAQRLDYRFYDSDHEIAAAAGVPIPTIFEMEGEQGFRSRETAILKKLIVLPHIVLSTGGGAVLKEENRALIRKSGTVVYLHAPPETLLERTRCDNSRPLLQVADPLAKLRELYAARDPVYRQTADFTVESANCRETVQTLLKRLSR.

15-20 (GAGKTT) lines the ATP pocket. T19 is a Mg(2+) binding site. Substrate is bound by residues D37, R61, and G83. Residue R121 participates in ATP binding. A substrate-binding site is contributed by R140.

This sequence belongs to the shikimate kinase family. Monomer. Mg(2+) is required as a cofactor.

Its subcellular location is the cytoplasm. The catalysed reaction is shikimate + ATP = 3-phosphoshikimate + ADP + H(+). It functions in the pathway metabolic intermediate biosynthesis; chorismate biosynthesis; chorismate from D-erythrose 4-phosphate and phosphoenolpyruvate: step 5/7. Catalyzes the specific phosphorylation of the 3-hydroxyl group of shikimic acid using ATP as a cosubstrate. The chain is Shikimate kinase from Neisseria gonorrhoeae (strain ATCC 700825 / FA 1090).